A 126-amino-acid polypeptide reads, in one-letter code: RutC family protein bbp_334 (126 aa).

It belongs to the RutC family.

The polypeptide is RutC family protein bbp_334 (Buchnera aphidicola subsp. Baizongia pistaciae (strain Bp)).